The sequence spans 33 residues: Cytochrome b6-f complex subunit 5 (33 aa).

A helical membrane pass occupies residues 5–25; it reads LLFGIILGLISCVLAGLFVSA.

Belongs to the PetG family. The 4 large subunits of the cytochrome b6-f complex are cytochrome b6, subunit IV (17 kDa polypeptide, PetD), cytochrome f and the Rieske protein, while the 4 small subunits are PetG, PetL, PetM and PetN. The complex functions as a dimer.

It is found in the plastid. The protein localises to the chloroplast thylakoid membrane. Its function is as follows. Component of the cytochrome b6-f complex, which mediates electron transfer between photosystem II (PSII) and photosystem I (PSI), cyclic electron flow around PSI, and state transitions. PetG is required for either the stability or assembly of the cytochrome b6-f complex. The chain is Cytochrome b6-f complex subunit 5 from Bigelowiella natans (Pedinomonas minutissima).